We begin with the raw amino-acid sequence, 243 residues long: Segregation and condensation protein A (243 aa).

This sequence belongs to the ScpA family. In terms of assembly, component of a cohesin-like complex composed of ScpA, ScpB and the Smc homodimer, in which ScpA and ScpB bind to the head domain of Smc. The presence of the three proteins is required for the association of the complex with DNA.

The protein localises to the cytoplasm. Participates in chromosomal partition during cell division. May act via the formation of a condensin-like complex containing Smc and ScpB that pull DNA away from mid-cell into both cell halves. This Halothermothrix orenii (strain H 168 / OCM 544 / DSM 9562) protein is Segregation and condensation protein A.